A 257-amino-acid polypeptide reads, in one-letter code: Zinc transporter ZupT (257 aa).

Helical transmembrane passes span L5–G25, L32–M52, and G61–L81. 2 residues coordinate Fe(2+): N120 and E123. Zn(2+) is bound by residues E123 and H148. 4 consecutive transmembrane segments (helical) span residues L137 to A157, I171 to I191, M195 to L215, and G236 to I256. N149, E152, and E181 together coordinate Fe(2+). E152 contributes to the Zn(2+) binding site.

This sequence belongs to the ZIP transporter (TC 2.A.5) family. ZupT subfamily.

It is found in the cell inner membrane. The enzyme catalyses Zn(2+)(in) = Zn(2+)(out). Its function is as follows. Mediates zinc uptake. May also transport other divalent cations. The chain is Zinc transporter ZupT from Escherichia coli O7:K1 (strain IAI39 / ExPEC).